Reading from the N-terminus, the 271-residue chain is OX-2 membrane glycoprotein homolog (271 aa).

Positions methionine 1–glycine 24 are cleaved as a signal peptide. Over alanine 25 to alanine 227 the chain is Extracellular. In terms of domain architecture, Ig-like V-type spans arginine 26 to serine 129. A disulfide bridge connects residues cysteine 39 and cysteine 109. N-linked (GlcNAc...) asparagine; by host glycans are attached at residues asparagine 83, asparagine 91, asparagine 138, asparagine 157, asparagine 166, and asparagine 208. Positions proline 130–proline 220 constitute an Ig-like C2-type domain. Cysteine 148 and cysteine 202 are disulfide-bonded. The helical transmembrane segment at alanine 228–leucine 248 threads the bilayer. Over histidine 249–glutamine 271 the chain is Cytoplasmic.

Interacts with human CD200R1. In terms of processing, N-glycosylated.

The protein localises to the host cell membrane. In terms of biological role, dramatically stimulates primary monocytes, macrophages, and dendritic cells to produce the inflammatory cytokines interleukin 1-beta, IL-6, monocyte chemoattractant protein 1, and TNF-alpha. The induction of inflammatory cytokine production potentially promotes the cytokine-mediated angiogenic proliferation of KSHV-infected cells. This Human herpesvirus 8 type P (isolate GK18) (HHV-8) protein is OX-2 membrane glycoprotein homolog (K14).